The primary structure comprises 672 residues: ATP-dependent zinc metalloprotease FtsH 1 (672 aa).

Residues 1–22 (MKKDSESNSSDKSNKEELSTGR) form a disordered region. The Cytoplasmic segment spans residues 1–23 (MKKDSESNSSDKSNKEELSTGRR). A helical membrane pass occupies residues 24-44 (GGNPMIIALVITVLAAMLFFN). The Periplasmic portion of the chain corresponds to 45-141 (QPEPSSLISA…KFSPPDNTAA (97 aa)). The chain crosses the membrane as a helical span at residues 142-162 (ILNLLILVGLPLAIFFFIFMM). Residues 163–672 (IRRTRNDMMG…TSNASARRED (510 aa)) lie on the Cytoplasmic side of the membrane. Residue 237 to 244 (GPPGTGKT) participates in ATP binding. A Zn(2+)-binding site is contributed by His-458. Glu-459 is a catalytic residue. 2 residues coordinate Zn(2+): His-462 and Asp-534. Residues 642–672 (RLGDEEGKVEQIMAPEGAAERTSNASARRED) are disordered. Residues 662-672 (RTSNASARRED) show a composition bias toward polar residues.

This sequence in the central section; belongs to the AAA ATPase family. In the C-terminal section; belongs to the peptidase M41 family. As to quaternary structure, homohexamer. The cofactor is Zn(2+).

The protein localises to the cell inner membrane. Functionally, acts as a processive, ATP-dependent zinc metallopeptidase for both cytoplasmic and membrane proteins. Plays a role in the quality control of integral membrane proteins. The sequence is that of ATP-dependent zinc metalloprotease FtsH 1 from Rhodopirellula baltica (strain DSM 10527 / NCIMB 13988 / SH1).